Reading from the N-terminus, the 402-residue chain is uncharacterized protein (402 aa).

12 helical membrane passes run 26-46 (IFMSFLKLGMVAFGGPTAIAY), 67-87 (VALAQIIPGASVMQVAAYVGF), 96-116 (FAAFMAYALPAFLIMLFLTII), 126-146 (TVSIFEALRIIVVSLAANGTL), 168-188 (LFILKFSPFIVIFVSIFIGFL), 213-233 (YVAYLLFGVFLFNLILYMIDS), 235-255 (LFLLSTLMMKVDVFAFGGGYG), 289-309 (PIVITATFVGYIVGGFIGSII), 312-332 (ISVFTPSFIILLSSIPIFDSL), 338-358 (FKNILHMILVSFVGLLVAVTI), 360-380 (FALLVDWSIQALIIFIVSFLL), and 381-401 (LYKKYNMLLVVLLSLVLGYLI).

This sequence belongs to the chromate ion transporter (CHR) (TC 2.A.51) family.

It localises to the cell membrane. This is an uncharacterized protein from Methanocaldococcus jannaschii (strain ATCC 43067 / DSM 2661 / JAL-1 / JCM 10045 / NBRC 100440) (Methanococcus jannaschii).